The following is a 206-amino-acid chain: Small ribosomal subunit protein uS4 (206 aa).

An S4 RNA-binding domain is found at 96–156; sequence TRLDNVVYRM…EKSRTQARIK (61 aa).

The protein belongs to the universal ribosomal protein uS4 family. As to quaternary structure, part of the 30S ribosomal subunit. Contacts protein S5. The interaction surface between S4 and S5 is involved in control of translational fidelity.

One of the primary rRNA binding proteins, it binds directly to 16S rRNA where it nucleates assembly of the body of the 30S subunit. Its function is as follows. With S5 and S12 plays an important role in translational accuracy. This chain is Small ribosomal subunit protein uS4, found in Shewanella amazonensis (strain ATCC BAA-1098 / SB2B).